The following is a 705-amino-acid chain: Translation initiation factor IF-2 (705 aa).

The tract at residues 40-124 is disordered; sequence DDQIKALDKK…QPAAPKEIPS (85 aa). Basic and acidic residues predominate over residues 41-58; the sequence is DQIKALDKKFKKEQKNDN. Low complexity predominate over residues 59 to 77; the sequence is KQSTQNNHQKSNNQNQNKG. Basic residues predominate over residues 94–108; it reads KGNKKNNRNNKKNNK. The tr-type G domain maps to 207–376; the sequence is ERPAVVTIMG…GLVAEVQELK (170 aa). A G1 region spans residues 216-223; the sequence is GHVDHGKT. A GTP-binding site is contributed by 216 to 223; the sequence is GHVDHGKT. Residues 241-245 are G2; that stretch reads GITQH. The tract at residues 262–265 is G3; it reads DTPG. Residues 262 to 266 and 316 to 319 contribute to the GTP site; these read DTPGH and NKID. The tract at residues 316-319 is G4; that stretch reads NKID. The segment at 352 to 354 is G5; it reads SAL.

Belongs to the TRAFAC class translation factor GTPase superfamily. Classic translation factor GTPase family. IF-2 subfamily.

Its subcellular location is the cytoplasm. Functionally, one of the essential components for the initiation of protein synthesis. Protects formylmethionyl-tRNA from spontaneous hydrolysis and promotes its binding to the 30S ribosomal subunits. Also involved in the hydrolysis of GTP during the formation of the 70S ribosomal complex. The sequence is that of Translation initiation factor IF-2 from Staphylococcus aureus (strain Mu3 / ATCC 700698).